The chain runs to 611 residues: Creatine transporter (611 aa).

The chain crosses the membrane as a helical span at residues 45–65 (FIMSCVGFAVGLGNVWRFPYL). Residues 66–71 (CYKNGG) lie on the Extracellular side of the membrane. The helical transmembrane segment at 72-92 (GVFLIPYLLVAVFGGIPIFFL) threads the bilayer. The Cytoplasmic segment spans residues 93–122 (EISLGQFMKAGGINAWNIAPLFKGLGYASM). Residues 123–143 (VIVFFCNTYYILVLTWSSFYL) form a helical membrane-spanning segment. Topologically, residues 144-207 (VQSFSSPLPW…LSSGLGDVGE (64 aa)) are extracellular. N157 and N171 each carry an N-linked (GlcNAc...) asparagine glycan. Residues 208-228 (IGWELTLCLTATWMLVYFCIW) traverse the membrane as a helical segment. Over 229–246 (KGVKTSGKVVYVTATFPY) the chain is Cytoplasmic. Residues 247 to 267 (IILVILLVRGVTLHGAVQGIV) traverse the membrane as a helical segment. The Extracellular portion of the chain corresponds to 268 to 281 (YYLQPDWGKLGEAQ). A helical transmembrane segment spans residues 282-302 (VWIDAGTQIFFSYAIGLGTLT). Topologically, residues 303–318 (ALGSYNQLHNDCYKDA) are cytoplasmic. Residues 319–339 (FILSLVNSATSFFAGLVVFSI) form a helical membrane-spanning segment. The Extracellular portion of the chain corresponds to 340–371 (LGFMAVEEGVDISVVAESGPGLAFIAYPKAVT). A helical membrane pass occupies residues 372–392 (LMPFPQVWAVLFFIMLLCLGL). Topologically, residues 393–421 (GSQFVGVEGFVTAILDLWPSKFSFRYLRE) are cytoplasmic. A helical membrane pass occupies residues 422–442 (VVVAMVICLSFLIDLSMITEG). Topologically, residues 443-456 (GMYIFQIFDYYSAS) are extracellular. The helical transmembrane segment at 457–477 (GTTLLWTAFWECVAVAWVYGG) threads the bilayer. At 478-497 (DRYLDDLAWMLGYRPWALVK) the chain is on the cytoplasmic side. A helical membrane pass occupies residues 498 to 518 (WCWSVITPLVCMGIFTFHLVN). The Extracellular portion of the chain corresponds to 519–537 (YKPLTYNKTYTYPWWGEAI). N-linked (GlcNAc...) asparagine glycosylation is present at N525. Residues 538-558 (GWCLALASMLCVPTTVLYSLS) form a helical membrane-spanning segment. Residues 559 to 611 (RGRGSLKERWRKLTTPVWASHHLAYKMAGAKINQPCEGVVSCEEKVVIFESVL) lie on the Cytoplasmic side of the membrane.

This sequence belongs to the sodium:neurotransmitter symporter (SNF) (TC 2.A.22) family.

Its subcellular location is the membrane. Its function is as follows. Required for the uptake of creatine. The sequence is that of Creatine transporter from Torpedo marmorata (Marbled electric ray).